The primary structure comprises 164 residues: Transcription elongation factor GreA (164 aa).

A coiled-coil region spans residues 50 to 76 (YHAAREEQGQQEARIRQLQELLNNAKV).

Belongs to the GreA/GreB family.

In terms of biological role, necessary for efficient RNA polymerase transcription elongation past template-encoded arresting sites. The arresting sites in DNA have the property of trapping a certain fraction of elongating RNA polymerases that pass through, resulting in locked ternary complexes. Cleavage of the nascent transcript by cleavage factors such as GreA or GreB allows the resumption of elongation from the new 3'terminus. GreA releases sequences of 2 to 3 nucleotides. The protein is Transcription elongation factor GreA of Mycolicibacterium smegmatis (strain ATCC 700084 / mc(2)155) (Mycobacterium smegmatis).